We begin with the raw amino-acid sequence, 326 residues long: Ribose-phosphate pyrophosphokinase (326 aa).

ATP contacts are provided by residues 45 to 47 (NGE) and 104 to 105 (RQ). The Mg(2+) site is built by H138 and D178. K202 is an active-site residue. D-ribose 5-phosphate-binding positions include R204, D230, and 234–238 (DTGGT).

The protein belongs to the ribose-phosphate pyrophosphokinase family. Class I subfamily. As to quaternary structure, homohexamer. Mg(2+) is required as a cofactor.

Its subcellular location is the cytoplasm. The enzyme catalyses D-ribose 5-phosphate + ATP = 5-phospho-alpha-D-ribose 1-diphosphate + AMP + H(+). It participates in metabolic intermediate biosynthesis; 5-phospho-alpha-D-ribose 1-diphosphate biosynthesis; 5-phospho-alpha-D-ribose 1-diphosphate from D-ribose 5-phosphate (route I): step 1/1. Functionally, involved in the biosynthesis of the central metabolite phospho-alpha-D-ribosyl-1-pyrophosphate (PRPP) via the transfer of pyrophosphoryl group from ATP to 1-hydroxyl of ribose-5-phosphate (Rib-5-P). The polypeptide is Ribose-phosphate pyrophosphokinase (Mycobacterium bovis (strain ATCC BAA-935 / AF2122/97)).